Here is a 156-residue protein sequence, read N- to C-terminus: Hydrogenase 3 maturation protease (156 aa).

Residues D16, D62, and H90 each coordinate Ni(2+).

It belongs to the peptidase A31 family. In terms of assembly, monomer.

The enzyme catalyses This enzyme specifically removes a 32-amino acid peptide from the C-terminus of the precursor of the large subunit of E.coli hydrogenase 3 by cleavage at the C-terminal side of Arg-537.. Functionally, protease involved in the C-terminal processing of HycE, the large subunit of hydrogenase 3. This Escherichia coli O157:H7 protein is Hydrogenase 3 maturation protease (hycI).